A 638-amino-acid chain; its full sequence is 1-deoxy-D-xylulose-5-phosphate synthase (638 aa).

Thiamine diphosphate contacts are provided by residues His79 and 120-122 (GHS). Mg(2+) is bound at residue Asp151. Residues 152–153 (GA), Asn182, Tyr291, and Glu373 contribute to the thiamine diphosphate site. Asn182 contributes to the Mg(2+) binding site.

This sequence belongs to the transketolase family. DXPS subfamily. As to quaternary structure, homodimer. It depends on Mg(2+) as a cofactor. Thiamine diphosphate is required as a cofactor.

It catalyses the reaction D-glyceraldehyde 3-phosphate + pyruvate + H(+) = 1-deoxy-D-xylulose 5-phosphate + CO2. It participates in metabolic intermediate biosynthesis; 1-deoxy-D-xylulose 5-phosphate biosynthesis; 1-deoxy-D-xylulose 5-phosphate from D-glyceraldehyde 3-phosphate and pyruvate: step 1/1. Catalyzes the acyloin condensation reaction between C atoms 2 and 3 of pyruvate and glyceraldehyde 3-phosphate to yield 1-deoxy-D-xylulose-5-phosphate (DXP). This Xanthomonas campestris pv. campestris (strain 8004) protein is 1-deoxy-D-xylulose-5-phosphate synthase.